The primary structure comprises 353 residues: UDP-N-acetylglucosamine--N-acetylmuramyl-(pentapeptide) pyrophosphoryl-undecaprenol N-acetylglucosamine transferase (353 aa).

Residues 10–12 (TGG), asparagine 124, serine 183, and glutamine 283 contribute to the UDP-N-acetyl-alpha-D-glucosamine site.

This sequence belongs to the glycosyltransferase 28 family. MurG subfamily.

It is found in the cell inner membrane. The catalysed reaction is di-trans,octa-cis-undecaprenyl diphospho-N-acetyl-alpha-D-muramoyl-L-alanyl-D-glutamyl-meso-2,6-diaminopimeloyl-D-alanyl-D-alanine + UDP-N-acetyl-alpha-D-glucosamine = di-trans,octa-cis-undecaprenyl diphospho-[N-acetyl-alpha-D-glucosaminyl-(1-&gt;4)]-N-acetyl-alpha-D-muramoyl-L-alanyl-D-glutamyl-meso-2,6-diaminopimeloyl-D-alanyl-D-alanine + UDP + H(+). It functions in the pathway cell wall biogenesis; peptidoglycan biosynthesis. Cell wall formation. Catalyzes the transfer of a GlcNAc subunit on undecaprenyl-pyrophosphoryl-MurNAc-pentapeptide (lipid intermediate I) to form undecaprenyl-pyrophosphoryl-MurNAc-(pentapeptide)GlcNAc (lipid intermediate II). In Helicobacter pylori (strain ATCC 700392 / 26695) (Campylobacter pylori), this protein is UDP-N-acetylglucosamine--N-acetylmuramyl-(pentapeptide) pyrophosphoryl-undecaprenol N-acetylglucosamine transferase.